We begin with the raw amino-acid sequence, 433 residues long: Glutamate-1-semialdehyde 2,1-aminomutase (433 aa).

The residue at position 273 (K273) is an N6-(pyridoxal phosphate)lysine.

The protein belongs to the class-III pyridoxal-phosphate-dependent aminotransferase family. HemL subfamily. Homodimer. The cofactor is pyridoxal 5'-phosphate.

It localises to the cytoplasm. The catalysed reaction is (S)-4-amino-5-oxopentanoate = 5-aminolevulinate. Its pathway is porphyrin-containing compound metabolism; protoporphyrin-IX biosynthesis; 5-aminolevulinate from L-glutamyl-tRNA(Glu): step 2/2. It functions in the pathway porphyrin-containing compound metabolism; chlorophyll biosynthesis. The protein is Glutamate-1-semialdehyde 2,1-aminomutase of Microcystis aeruginosa (strain NIES-843 / IAM M-2473).